Reading from the N-terminus, the 707-residue chain is Ribosomal RNA large subunit methyltransferase K/L (707 aa).

The THUMP domain occupies Val-44 to Leu-155.

It belongs to the methyltransferase superfamily. RlmKL family.

It is found in the cytoplasm. The catalysed reaction is guanosine(2445) in 23S rRNA + S-adenosyl-L-methionine = N(2)-methylguanosine(2445) in 23S rRNA + S-adenosyl-L-homocysteine + H(+). It catalyses the reaction guanosine(2069) in 23S rRNA + S-adenosyl-L-methionine = N(2)-methylguanosine(2069) in 23S rRNA + S-adenosyl-L-homocysteine + H(+). In terms of biological role, specifically methylates the guanine in position 2445 (m2G2445) and the guanine in position 2069 (m7G2069) of 23S rRNA. This chain is Ribosomal RNA large subunit methyltransferase K/L, found in Legionella pneumophila (strain Corby).